The primary structure comprises 116 residues: Putative pterin-4-alpha-carbinolamine dehydratase (116 aa).

It belongs to the pterin-4-alpha-carbinolamine dehydratase family.

It carries out the reaction (4aS,6R)-4a-hydroxy-L-erythro-5,6,7,8-tetrahydrobiopterin = (6R)-L-erythro-6,7-dihydrobiopterin + H2O. The protein is Putative pterin-4-alpha-carbinolamine dehydratase of Paracidovorax citrulli (strain AAC00-1) (Acidovorax citrulli).